A 640-amino-acid chain; its full sequence is Threonine--tRNA ligase (640 aa).

Residues 1 to 61 (MPIITLPNGD…TEDATLQIIT (61 aa)) enclose the TGS domain. Positions 242-533 (DHRKIGKALD…LIEHYAGFMP (292 aa)) are catalytic. Zn(2+) contacts are provided by Cys-333, His-384, and His-510.

It belongs to the class-II aminoacyl-tRNA synthetase family. Homodimer. The cofactor is Zn(2+).

The protein resides in the cytoplasm. The catalysed reaction is tRNA(Thr) + L-threonine + ATP = L-threonyl-tRNA(Thr) + AMP + diphosphate + H(+). Functionally, catalyzes the attachment of threonine to tRNA(Thr) in a two-step reaction: L-threonine is first activated by ATP to form Thr-AMP and then transferred to the acceptor end of tRNA(Thr). Also edits incorrectly charged L-seryl-tRNA(Thr). This chain is Threonine--tRNA ligase, found in Acinetobacter baylyi (strain ATCC 33305 / BD413 / ADP1).